Consider the following 321-residue polypeptide: MAVYTDIAEDDLKWFLTEYDAGTLLSYKGIAEGVENSNFLLHTSKDPLILTLYEKRVEKSDLPFFLGLMQHLSARGLSCPLPLPRRDGALLGSLSGRPAALISFLEGMWLRKPEAKHCREVGRALAEMHVAGDGFALKRPNALSIDGWRGLWEKSEARAGEVEPGLRDEIRSELDFLSAAWPSGLPAGVIHADLFPDNVFFLGDQLSGLIDFYFACNDLLAYDVSICLNAWCFEKDGAYNITKGTAMLEGYQSVRPLSDAEISALPVLSRGSALRFFLTRLYDWLTTPEGAMVTKKDPLEYLRKLRFHRQIKSPAEYGLSL.

This sequence belongs to the pseudomonas-type ThrB family.

The catalysed reaction is L-homoserine + ATP = O-phospho-L-homoserine + ADP + H(+). Its pathway is amino-acid biosynthesis; L-threonine biosynthesis; L-threonine from L-aspartate: step 4/5. This chain is Homoserine kinase, found in Rhizobium johnstonii (strain DSM 114642 / LMG 32736 / 3841) (Rhizobium leguminosarum bv. viciae).